Reading from the N-terminus, the 577-residue chain is DNA primase (577 aa).

Residues 40-64 form a CHC2-type zinc finger; the sequence is CPFHHDKTPSFTVSNEKQFYYCFGC. Positions 255–337 constitute a Toprim domain; sequence VYLLVVEGYI…KKTLKFILLP (83 aa). The Mg(2+) site is built by Glu-261, Asp-305, and Asp-307.

The protein belongs to the DnaG primase family. As to quaternary structure, monomer. Interacts with DnaB. Zn(2+) is required as a cofactor. The cofactor is Mg(2+).

It catalyses the reaction ssDNA + n NTP = ssDNA/pppN(pN)n-1 hybrid + (n-1) diphosphate.. RNA polymerase that catalyzes the synthesis of short RNA molecules used as primers for DNA polymerase during DNA replication. The chain is DNA primase from Buchnera aphidicola subsp. Acyrthosiphon pisum (strain APS) (Acyrthosiphon pisum symbiotic bacterium).